A 296-amino-acid chain; its full sequence is Cytidine deaminase (296 aa).

2 CMP/dCMP-type deaminase domains span residues 47–167 and 186–296; these read EESE…FGPS and DSSD…IDPA. 88–90 serves as a coordination point for substrate; that stretch reads NLE. Residue H101 coordinates Zn(2+). E103 functions as the Proton donor in the catalytic mechanism. Zn(2+) is bound by residues C128 and C131.

It belongs to the cytidine and deoxycytidylate deaminase family. As to quaternary structure, homodimer. Zn(2+) is required as a cofactor.

It catalyses the reaction cytidine + H2O + H(+) = uridine + NH4(+). The enzyme catalyses 2'-deoxycytidine + H2O + H(+) = 2'-deoxyuridine + NH4(+). In terms of biological role, this enzyme scavenges exogenous and endogenous cytidine and 2'-deoxycytidine for UMP synthesis. The chain is Cytidine deaminase from Shewanella woodyi (strain ATCC 51908 / MS32).